The sequence spans 198 residues: Protein uvp1 (198 aa).

The region spanning 1–140 (MIIGYARKST…SGLAAARARG (140 aa)) is the Resolvase/invertase-type recombinase catalytic domain. Serine 9 functions as the O-(5'-phospho-DNA)-serine intermediate in the catalytic mechanism. The H-T-H motif DNA-binding region spans 168–187 (VGAVAKRFNVSRMTIYRYTT).

This sequence belongs to the site-specific recombinase resolvase family.

Cooperates with the mucAB genes in the DNA repair process. Could be a resolvase-invertase protein. The sequence is that of Protein uvp1 (uvp1) from Escherichia coli.